A 261-amino-acid chain; its full sequence is Syntaxin-7 (261 aa).

N-acetylserine is present on Ser-2. Topologically, residues 2 to 238 (SYTPGIGGDP…NYQRKSRKTL (237 aa)) are cytoplasmic. Phosphothreonine is present on Thr-4. The stretch at 47-68 (ELRQQLQQEQQYTNQLAKETDK) forms a coiled coil. At Thr-79 the chain carries Phosphothreonine. 4 positions are modified to phosphoserine: Ser-125, Ser-126, Ser-129, and Ser-205. The segment at 128–148 (VSGGFPEDSSKEKNFVSWESQ) is disordered. The 63-residue stretch at 165–227 (LRLIHERESS…QQANQQLSRA (63 aa)) folds into the t-SNARE coiled-coil homology domain. A helical; Anchor for type IV membrane protein membrane pass occupies residues 239-259 (CIIILILVVGIVIIFFIVWGL). Topologically, residues 260–261 (KG) are vesicular.

It belongs to the syntaxin family. As to quaternary structure, interacts with VPS11, VPS16 and VPS18. Interacts with VPS33A. Forms a SNARE complex with VTI1B, STX8 and VAMP8 which functions in the homotypic fusion of late endosomes. Component of the SNARE complex composed of STX7, STX8, VAMP7 and VTI1B that is required for heterotypic fusion of late endosomes with lysosomes. Interacts with TPC1. In terms of tissue distribution, detected in all tissues tested. Highest expression is found in kidney followed by lung, spleen, heart and brain. Lower expression, in skeletal muscle, liver and testis.

The protein resides in the early endosome membrane. Its function is as follows. May be involved in protein trafficking from the plasma membrane to the early endosome (EE) as well as in homotypic fusion of endocytic organelles. Mediates the endocytic trafficking from early endosomes to late endosomes and lysosomes. This chain is Syntaxin-7 (Stx7), found in Rattus norvegicus (Rat).